A 252-amino-acid polypeptide reads, in one-letter code: MLEIKSIPAFNDNYIWLIQNSDKRCAVVDPGDAQPVLDYLQANELTLEAILVTHHHNDHIGGVPDLVRAFPHVTVVGPKAEPIPTLTTPMEEGDKLELFGEIFLVLGLPGHTLGHIGYVGDSKLFCGDVLFSAGCGRIFEGTPEQMFESLSKIAALPEETQVFCAHEYTASNVAFALAVEPDNEQLRQYRDDVNRLRALNIPTLPTTLRKEKWINPFLRTTNPDVVKSVANRIKNSDPCSVFTALREWKNEF.

Positions 54, 56, 58, 59, 111, 128, and 166 each coordinate Zn(2+).

Belongs to the metallo-beta-lactamase superfamily. Glyoxalase II family. In terms of assembly, monomer. The cofactor is Zn(2+).

It catalyses the reaction an S-(2-hydroxyacyl)glutathione + H2O = a 2-hydroxy carboxylate + glutathione + H(+). It functions in the pathway secondary metabolite metabolism; methylglyoxal degradation; (R)-lactate from methylglyoxal: step 2/2. Its function is as follows. Thiolesterase that catalyzes the hydrolysis of S-D-lactoyl-glutathione to form glutathione and D-lactic acid. This is Hydroxyacylglutathione hydrolase from Vibrio parahaemolyticus serotype O3:K6 (strain RIMD 2210633).